The primary structure comprises 568 residues: MRFTKFYAPSLKEAPKDASLPSHIFLTRAGFIEQIGSGLYNFLPLGKRVLDKIKNIVKEEMDKAGAQEVNLSFITPASLWQESGRYNVFGKELLRFKDRKENEFVLGPTHEEAMLSLVKNKITSYKQLPLHLYQIGLKFRDEARPRFGLLRCREFLMKDGYSFHANEEDLGCEFELMYKTYSQILQRMGLDFRAVEADSGAIGGSGSKEFMVLAKNGEDDILICENCDYAANVEAAKRAKKTCQDERPEANYASKFHTPNIKTIDSLAQFFKINAFYTIKAVVKKAIYENESKLVVFFIRGSDDLQEIKAQNACSALELVDASEEELEKAGLVAGFIGFVGLKDIDFYIDFELENEKQMIMGANEKDYHLIGIDVVNLNKDRFKDLIEVKEGDCCAKCGAKLKQSKGIEVGHIFKLGQKYSKAMNANFLDENGKSQPFYMGCYGIGVSRLLAVAIEASHDEKGCIWNKTLAPFVLEIIVSNLKDEKALEFANKLYEDLTNLGLEVLLDDRNERFGVKMNDFELMGFPYALVIGKGLENNEIELIQREGLVKELIKTDELMEILKKKVL.

Belongs to the class-II aminoacyl-tRNA synthetase family. ProS type 1 subfamily. As to quaternary structure, homodimer.

The protein resides in the cytoplasm. The catalysed reaction is tRNA(Pro) + L-proline + ATP = L-prolyl-tRNA(Pro) + AMP + diphosphate. Catalyzes the attachment of proline to tRNA(Pro) in a two-step reaction: proline is first activated by ATP to form Pro-AMP and then transferred to the acceptor end of tRNA(Pro). As ProRS can inadvertently accommodate and process non-cognate amino acids such as alanine and cysteine, to avoid such errors it has two additional distinct editing activities against alanine. One activity is designated as 'pretransfer' editing and involves the tRNA(Pro)-independent hydrolysis of activated Ala-AMP. The other activity is designated 'posttransfer' editing and involves deacylation of mischarged Ala-tRNA(Pro). The misacylated Cys-tRNA(Pro) is not edited by ProRS. The sequence is that of Proline--tRNA ligase from Campylobacter jejuni subsp. jejuni serotype O:6 (strain 81116 / NCTC 11828).